We begin with the raw amino-acid sequence, 206 residues long: Probable glutathione S-transferase 8 (206 aa).

The GST N-terminal domain occupies 2–79; that stretch reads VHYKLSYFPI…FLARQFGING (78 aa). Residues Tyr-8, Trp-39, Lys-43, 49–51, and 63–64 each bind glutathione; these read GQL and QS. In terms of domain architecture, GST C-terminal spans 81–206; it reads CAWEEAQVNS…WLETRPETQF (126 aa).

The protein belongs to the GST superfamily. Sigma family.

It catalyses the reaction RX + glutathione = an S-substituted glutathione + a halide anion + H(+). Its function is as follows. Conjugation of reduced glutathione to a wide number of exogenous and endogenous hydrophobic electrophiles. In Caenorhabditis elegans, this protein is Probable glutathione S-transferase 8 (gst-8).